Here is a 179-residue protein sequence, read N- to C-terminus: Large ribosomal subunit protein uL5 (179 aa).

The protein belongs to the universal ribosomal protein uL5 family. As to quaternary structure, part of the 50S ribosomal subunit; part of the 5S rRNA/L5/L18/L25 subcomplex. Contacts the 5S rRNA and the P site tRNA. Forms a bridge to the 30S subunit in the 70S ribosome.

In terms of biological role, this is one of the proteins that bind and probably mediate the attachment of the 5S RNA into the large ribosomal subunit, where it forms part of the central protuberance. In the 70S ribosome it contacts protein S13 of the 30S subunit (bridge B1b), connecting the 2 subunits; this bridge is implicated in subunit movement. Contacts the P site tRNA; the 5S rRNA and some of its associated proteins might help stabilize positioning of ribosome-bound tRNAs. The polypeptide is Large ribosomal subunit protein uL5 (Erwinia tasmaniensis (strain DSM 17950 / CFBP 7177 / CIP 109463 / NCPPB 4357 / Et1/99)).